Here is a 479-residue protein sequence, read N- to C-terminus: Cardiolipin synthase A (479 aa).

A run of 2 helical transmembrane segments spans residues 8-28 (IFGY…IHAV) and 38-58 (IAWA…YLVF). 2 PLD phosphodiesterase domains span residues 218–245 (VNFR…GDEY) and 392–419 (QPGF…DNRS). Catalysis depends on residues histidine 223, lysine 225, aspartate 230, histidine 397, lysine 399, and aspartate 404.

The protein belongs to the phospholipase D family. Cardiolipin synthase subfamily. ClsA sub-subfamily.

The protein resides in the cell inner membrane. The catalysed reaction is 2 a 1,2-diacyl-sn-glycero-3-phospho-(1'-sn-glycerol) = a cardiolipin + glycerol. Catalyzes the reversible phosphatidyl group transfer from one phosphatidylglycerol molecule to another to form cardiolipin (CL) (diphosphatidylglycerol) and glycerol. The protein is Cardiolipin synthase A of Pseudomonas fluorescens (strain ATCC BAA-477 / NRRL B-23932 / Pf-5).